The sequence spans 187 residues: Peptide deformylase (187 aa).

The Fe cation site is built by cysteine 114 and histidine 157. Glutamate 158 is an active-site residue. Fe cation is bound at residue histidine 161.

This sequence belongs to the polypeptide deformylase family. Requires Fe(2+) as cofactor.

It carries out the reaction N-terminal N-formyl-L-methionyl-[peptide] + H2O = N-terminal L-methionyl-[peptide] + formate. Removes the formyl group from the N-terminal Met of newly synthesized proteins. Requires at least a dipeptide for an efficient rate of reaction. N-terminal L-methionine is a prerequisite for activity but the enzyme has broad specificity at other positions. This chain is Peptide deformylase, found in Enterococcus faecalis (strain ATCC 700802 / V583).